The chain runs to 300 residues: B3 domain-containing protein At5g57720 (300 aa).

The segment at residues 11–105 is a DNA-binding region (TF-B3); sequence PDFLKIFNSH…SFWVRIHRNG (95 aa). Positions 115–142 are disordered; it reads KIQEISDDEDETNGDGDPHMEEEGDTDE. Over residues 119–129 the composition is skewed to acidic residues; it reads ISDDEDETNGD.

The protein localises to the nucleus. The protein is B3 domain-containing protein At5g57720 of Arabidopsis thaliana (Mouse-ear cress).